Reading from the N-terminus, the 466-residue chain is Signal recognition particle 54 kDa protein (466 aa).

GTP contacts are provided by residues 104–111, 184–188, and 242–245; these read GLQGSGKT, DTAGR, and TKLD. The segment at 444-466 is disordered; that stretch reads MQQGGGGGGGGGGGLGGMGPFGD. Positions 446–466 are enriched in gly residues; it reads QGGGGGGGGGGGLGGMGPFGD.

It belongs to the GTP-binding SRP family. SRP54 subfamily. As to quaternary structure, part of the signal recognition particle protein translocation system, which is composed of SRP and FtsY. Archaeal SRP consists of a 7S RNA molecule of 300 nucleotides and two protein subunits: SRP54 and SRP19.

The protein resides in the cytoplasm. The catalysed reaction is GTP + H2O = GDP + phosphate + H(+). Functionally, involved in targeting and insertion of nascent membrane proteins into the cytoplasmic membrane. Binds to the hydrophobic signal sequence of the ribosome-nascent chain (RNC) as it emerges from the ribosomes. The SRP-RNC complex is then targeted to the cytoplasmic membrane where it interacts with the SRP receptor FtsY. This chain is Signal recognition particle 54 kDa protein, found in Natronomonas pharaonis (strain ATCC 35678 / DSM 2160 / CIP 103997 / JCM 8858 / NBRC 14720 / NCIMB 2260 / Gabara) (Halobacterium pharaonis).